Here is a 155-residue protein sequence, read N- to C-terminus: MTNIHYLPELEDSYSALNSDQIEILRQQVLNEGGEISSIQSRFNYAWGLVRSTNKEDQMLGVKLLTDIYKESPMRRRECLYYLTIGCYKLGEYSTAKRYVDALVHHEPENKQALMLQTAVENKITSQGLKGIALISAGIAIGATTIGLLIRGRRR.

Over Met-1–Lys-130 the chain is Cytoplasmic. A TPR repeat occupies Arg-77–Asn-110. A helical transmembrane segment spans residues Gly-131–Ile-150. The Mitochondrial intermembrane segment spans residues Arg-151–Arg-155.

The protein belongs to the FIS1 family.

The protein localises to the mitochondrion outer membrane. Functionally, has a role in mitochondrial fission. Has a role in outer membrane fission but not matrix separation. This Kluyveromyces lactis (strain ATCC 8585 / CBS 2359 / DSM 70799 / NBRC 1267 / NRRL Y-1140 / WM37) (Yeast) protein is Mitochondrial fission 1 protein (FIS1).